Reading from the N-terminus, the 237-residue chain is Segregation and condensation protein A (237 aa).

This sequence belongs to the ScpA family. Component of a cohesin-like complex composed of ScpA, ScpB and the Smc homodimer, in which ScpA and ScpB bind to the head domain of Smc. The presence of the three proteins is required for the association of the complex with DNA.

Its subcellular location is the cytoplasm. Participates in chromosomal partition during cell division. May act via the formation of a condensin-like complex containing Smc and ScpB that pull DNA away from mid-cell into both cell halves. This is Segregation and condensation protein A from Streptococcus thermophilus (strain ATCC BAA-250 / LMG 18311).